The primary structure comprises 612 residues: MEFSRETRRLALQKMQERDLDLLIIGGGITGAGVALQAAASGLDTGLIEMQDFAQGTSSRSTKLVHGGLRYLKQFDVEVVSDTVSERAVVQQIAPHIPKPDPMLLPVYDEPGSTFSMFRLKVAMDLYDLLAGVSNTPAANKVLTKEEVLKREPDLKQEGLLGGGVYLDFRNNDARLVIENIKRANRDGALIASHVKAEDFLLDDNGKIIGVKARDLLSDQEIIIKAKLVINTTGPWSDEIRQFSHKGQPIHQMRPTKGVHLVVDRQKLPVSQPVYVDTGLNDGRMVFVLPREEKTYFGTTDTDYTGDLEHPQVTQEDVDYLLGVVNNRFPNANVTIDDIESSWAGLRPLLSGNSASDYNGGNSGKVSDDSFDHLVDTVKAYINHEDSREAVEKAIKQVETSTSEKELDPSAVSRGSSFERDENGLFTLAGGKITDYRKMAEGALTGIIQILKEEFGKSFKLINSKTYPVSGGEINPANVDSEIEAYAQLGTLSGLSMDDARYLANLYGSNAPKVFALTRQLTAAEGLSLAETLSLHYAMDYEMALKPTDYFLRRTNHLLFMRDSLDALIDPVINEMAKHFEWSDQERVAQEDDLRRVIADNDLSALKGHQEG.

Aspartate 21 to glutamate 49 serves as a coordination point for FAD. Residues glutamate 399–aspartate 408 are compositionally biased toward basic and acidic residues. Residues glutamate 399–phenylalanine 418 are disordered.

The protein belongs to the FAD-dependent glycerol-3-phosphate dehydrogenase family. FAD serves as cofactor.

The protein localises to the cytoplasm. The catalysed reaction is sn-glycerol 3-phosphate + O2 = dihydroxyacetone phosphate + H2O2. The protein is Alpha-glycerophosphate oxidase (glpO) of Streptococcus pyogenes serotype M1.